Reading from the N-terminus, the 397-residue chain is Bifunctional enzyme IspD/IspF (397 aa).

Residues 1–233 (MCAKKYKIAA…KLLFEEPKFR (233 aa)) are 2-C-methyl-D-erythritol 4-phosphate cytidylyltransferase. Positions 233-397 (RVGAGYDIHK…VLLHTNFYWK (165 aa)) are 2-C-methyl-D-erythritol 2,4-cyclodiphosphate synthase. The a divalent metal cation site is built by aspartate 239 and histidine 241. Residues 239–241 (DIH) and 270–271 (HS) each bind 4-CDP-2-C-methyl-D-erythritol 2-phosphate. Position 278 (histidine 278) interacts with a divalent metal cation. 4-CDP-2-C-methyl-D-erythritol 2-phosphate-binding positions include 292–294 (DIG), 368–371 (TTAE), tyrosine 375, and arginine 378.

It in the N-terminal section; belongs to the IspD/TarI cytidylyltransferase family. IspD subfamily. The protein in the C-terminal section; belongs to the IspF family. A divalent metal cation is required as a cofactor.

The catalysed reaction is 2-C-methyl-D-erythritol 4-phosphate + CTP + H(+) = 4-CDP-2-C-methyl-D-erythritol + diphosphate. It catalyses the reaction 4-CDP-2-C-methyl-D-erythritol 2-phosphate = 2-C-methyl-D-erythritol 2,4-cyclic diphosphate + CMP. It functions in the pathway isoprenoid biosynthesis; isopentenyl diphosphate biosynthesis via DXP pathway; isopentenyl diphosphate from 1-deoxy-D-xylulose 5-phosphate: step 2/6. The protein operates within isoprenoid biosynthesis; isopentenyl diphosphate biosynthesis via DXP pathway; isopentenyl diphosphate from 1-deoxy-D-xylulose 5-phosphate: step 4/6. Bifunctional enzyme that catalyzes the formation of 4-diphosphocytidyl-2-C-methyl-D-erythritol from CTP and 2-C-methyl-D-erythritol 4-phosphate (MEP) (IspD), and catalyzes the conversion of 4-diphosphocytidyl-2-C-methyl-D-erythritol 2-phosphate (CDP-ME2P) to 2-C-methyl-D-erythritol 2,4-cyclodiphosphate (ME-CPP) with a corresponding release of cytidine 5-monophosphate (CMP) (IspF). This is Bifunctional enzyme IspD/IspF from Wolbachia pipientis wMel.